The sequence spans 388 residues: MSRLLFLWTVLNPQELEKNLSVFQYVSDEASLNALVAQYQQSPLLVLDTEFVRTRTYYAKLGLIQAYDGKTLALIDPVALPDLSAFWSLLDNPNIIKLVHSCSEDLEVFAHYGQRQPTPLFDSQIAASLCGMGHGLGYAKLVETCLGEVIDKGESRTDWMRRPLTEAQLSYAANDVLYLYQLYPQLADKLKAQDRLGWLYEEGERMTEGRLATPDMDTAYLRVKNAFQLTEHQLAYLKVLAKWRLEKALARDLALGFVIKDHGLIALAKKQPKSMGDLLKLNDLTEQEKRIHGKDILRVMQTADLSNPPELVDVLALKPGYKSAFKNIKTCLSELCEQHAIPMEMLGSKRHIHEYLQWRWDKQQGELPTVLSGWRGQIAAESLAKLDV.

The 3'-5' exonuclease domain maps to 24-191 (QYVSDEASLN…LYPQLADKLK (168 aa)). The HRDC domain occupies 230–310 (TEHQLAYLKV…QTADLSNPPE (81 aa)).

It belongs to the RNase D family. The cofactor is a divalent metal cation.

It is found in the cytoplasm. It catalyses the reaction Exonucleolytic cleavage that removes extra residues from the 3'-terminus of tRNA to produce 5'-mononucleotides.. In terms of biological role, exonuclease involved in the 3' processing of various precursor tRNAs. Initiates hydrolysis at the 3'-terminus of an RNA molecule and releases 5'-mononucleotides. The chain is Ribonuclease D from Shewanella sp. (strain ANA-3).